Here is a 584-residue protein sequence, read N- to C-terminus: Cationic amino acid transporter 7, chloroplastic (584 aa).

Residues 1–49 (MEAQYRNHDGDTSFSSLRVYLNSLSDTPSRFSRRAVSVSTSYDEMSRVR) constitute a chloroplast transit peptide. Helical transmembrane passes span 62-82 (WYDL…FVTT), 90-110 (AGPS…LSAF), 131-151 (ITFG…DYVL), 185-205 (GFNE…FVIC), 214-234 (VNMV…VMGF), 254-274 (FFPF…LSYI), 293-313 (IPMG…LMAI), 346-366 (VVGI…MLGQ), 396-416 (ASAF…LNVL), 417-437 (LNLV…AVIF), 449-469 (WPTL…TLVW), 480-500 (FILG…HCVV), 508-528 (FWGV…NIFL), and 540-560 (FGFF…HASY).

It belongs to the amino acid-polyamine-organocation (APC) superfamily. Cationic amino acid transporter (CAT) (TC 2.A.3.3) family.

It localises to the plastid. The protein localises to the chloroplast membrane. In terms of biological role, permease involved in the transport of the cationic amino acids. The chain is Cationic amino acid transporter 7, chloroplastic (CAT7) from Arabidopsis thaliana (Mouse-ear cress).